The following is a 149-amino-acid chain: D-aminoacyl-tRNA deacylase (149 aa).

Positions 137–138 match the Gly-cisPro motif, important for rejection of L-amino acids motif; it reads GP.

The protein belongs to the DTD family. Homodimer.

The protein resides in the cytoplasm. It carries out the reaction glycyl-tRNA(Ala) + H2O = tRNA(Ala) + glycine + H(+). The enzyme catalyses a D-aminoacyl-tRNA + H2O = a tRNA + a D-alpha-amino acid + H(+). An aminoacyl-tRNA editing enzyme that deacylates mischarged D-aminoacyl-tRNAs. Also deacylates mischarged glycyl-tRNA(Ala), protecting cells against glycine mischarging by AlaRS. Acts via tRNA-based rather than protein-based catalysis; rejects L-amino acids rather than detecting D-amino acids in the active site. By recycling D-aminoacyl-tRNA to D-amino acids and free tRNA molecules, this enzyme counteracts the toxicity associated with the formation of D-aminoacyl-tRNA entities in vivo and helps enforce protein L-homochirality. The polypeptide is D-aminoacyl-tRNA deacylase (Herminiimonas arsenicoxydans).